A 206-amino-acid chain; its full sequence is Uridine kinase (206 aa).

G11–S18 contacts ATP.

It belongs to the uridine kinase family.

It localises to the cytoplasm. The catalysed reaction is uridine + ATP = UMP + ADP + H(+). The enzyme catalyses cytidine + ATP = CMP + ADP + H(+). It functions in the pathway pyrimidine metabolism; CTP biosynthesis via salvage pathway; CTP from cytidine: step 1/3. The protein operates within pyrimidine metabolism; UMP biosynthesis via salvage pathway; UMP from uridine: step 1/1. The chain is Uridine kinase from Clostridium botulinum (strain 657 / Type Ba4).